We begin with the raw amino-acid sequence, 290 residues long: Protease HtpX homolog (290 aa).

The next 2 membrane-spanning stretches (helical) occupy residues 5-27 and 32-51; these read MWLR…GYLF and VAFI…YWYS. His-133 is a binding site for Zn(2+). Residue Glu-134 is part of the active site. Position 137 (His-137) interacts with Zn(2+). The next 2 membrane-spanning stretches (helical) occupy residues 143-163 and 182-202; these read ILIG…AYWA and IIGA…IQAA. Glu-208 provides a ligand contact to Zn(2+).

It belongs to the peptidase M48B family. Zn(2+) serves as cofactor.

Its subcellular location is the cell membrane. The chain is Protease HtpX homolog from Thermococcus kodakarensis (strain ATCC BAA-918 / JCM 12380 / KOD1) (Pyrococcus kodakaraensis (strain KOD1)).